The sequence spans 283 residues: Light-independent protochlorophyllide reductase iron-sulfur ATP-binding protein (283 aa).

Residues 15–20 (GIGKST) and Lys44 each bind ATP. Ser19 serves as a coordination point for Mg(2+). Residues Cys100 and Cys134 each contribute to the [4Fe-4S] cluster site. Residue 185–186 (NR) coordinates ATP.

The protein belongs to the NifH/BchL/ChlL family. Homodimer. Protochlorophyllide reductase is composed of three subunits; ChlL, ChlN and ChlB. It depends on [4Fe-4S] cluster as a cofactor.

It carries out the reaction chlorophyllide a + oxidized 2[4Fe-4S]-[ferredoxin] + 2 ADP + 2 phosphate = protochlorophyllide a + reduced 2[4Fe-4S]-[ferredoxin] + 2 ATP + 2 H2O. The protein operates within porphyrin-containing compound metabolism; chlorophyll biosynthesis (light-independent). Its function is as follows. Component of the dark-operative protochlorophyllide reductase (DPOR) that uses Mg-ATP and reduced ferredoxin to reduce ring D of protochlorophyllide (Pchlide) to form chlorophyllide a (Chlide). This reaction is light-independent. The L component serves as a unique electron donor to the NB-component of the complex, and binds Mg-ATP. This Synechococcus sp. (strain JA-2-3B'a(2-13)) (Cyanobacteria bacterium Yellowstone B-Prime) protein is Light-independent protochlorophyllide reductase iron-sulfur ATP-binding protein.